A 371-amino-acid chain; its full sequence is Histidinol-phosphate aminotransferase (371 aa).

Lys228 carries the post-translational modification N6-(pyridoxal phosphate)lysine.

Belongs to the class-II pyridoxal-phosphate-dependent aminotransferase family. Histidinol-phosphate aminotransferase subfamily. Pyridoxal 5'-phosphate is required as a cofactor.

It carries out the reaction L-histidinol phosphate + 2-oxoglutarate = 3-(imidazol-4-yl)-2-oxopropyl phosphate + L-glutamate. Its pathway is amino-acid biosynthesis; L-histidine biosynthesis; L-histidine from 5-phospho-alpha-D-ribose 1-diphosphate: step 7/9. The protein is Histidinol-phosphate aminotransferase of Methanococcus maripaludis (strain C5 / ATCC BAA-1333).